The chain runs to 392 residues: MMQGRDPKRKIFLIATEESGDRLGSALMKVLRQRLGDGVQFEGVGGRTMAREGLETLFPIEELSIVGFAAVVQQLPKILRLIRETADAVLEAVPDALVIIDSPDFTHRVARRVRARNPAIPIVDYVSPQLWAWRPGRARTMLGYVDHVLGLLPFEPEEYRKLGGPPCSYVGHPLIEQLGSLRPNAEEQKRRNSELPVLLVLPGSRRSEIRHHIEVFGAALGRLQAEGRAFELMLPTMPHLEATVREGIASWPVKPQIVIGEAEKRAAFRIAHAALAKSGTVTLELALSGIPMVTAYRVGAIEAFILRRAIRVSSVILANLVIGEDVIPEFLQEDCTPEKLAPALSEVLTDSDMRRRQVEAFARLDTIMSTGNKAPSVLAADIVLATMRKGRR.

It belongs to the LpxB family.

It catalyses the reaction a lipid X + a UDP-2-N,3-O-bis[(3R)-3-hydroxyacyl]-alpha-D-glucosamine = a lipid A disaccharide + UDP + H(+). It participates in bacterial outer membrane biogenesis; LPS lipid A biosynthesis. Condensation of UDP-2,3-diacylglucosamine and 2,3-diacylglucosamine-1-phosphate to form lipid A disaccharide, a precursor of lipid A, a phosphorylated glycolipid that anchors the lipopolysaccharide to the outer membrane of the cell. This is Lipid-A-disaccharide synthase from Bradyrhizobium diazoefficiens (strain JCM 10833 / BCRC 13528 / IAM 13628 / NBRC 14792 / USDA 110).